Here is a 262-residue protein sequence, read N- to C-terminus: Steroid 5-alpha-reductase DET2 (262 aa).

6 consecutive transmembrane segments (helical) span residues 13–33, 51–71, 79–99, 113–133, 148–168, and 205–225; these read CLLT…FLQA, IAWF…FPFG, SLLL…IYPL, FPIT…YIQA, WFWW…YINI, and AIEW…GFFL.

This sequence belongs to the steroid 5-alpha reductase family.

The protein resides in the membrane. It carries out the reaction a 3-oxo-5alpha-steroid + NADP(+) = a 3-oxo-Delta(4)-steroid + NADPH + H(+). The catalysed reaction is 5alpha-campestan-3-one + NADP(+) = campest-4-en-3-one + NADPH + H(+). The enzyme catalyses (22S,24R)-22-hydroxy-5alpha-ergostan-3-one + NADP(+) = (22S)-22-hydroxycampest-4-en-3-one + NADPH + H(+). It catalyses the reaction 3-dehydro-6-deoxoteasterone + NADP(+) = (22R,23R)-22,23-dihydroxycampest-4-en-3-one + NADPH + H(+). It participates in plant hormone biosynthesis; brassinosteroid biosynthesis. Inhibited by the 4-azasteroids 4-MA. Its function is as follows. Involved in a reduction step in the biosynthesis of the plant steroid, brassinolide (BL); acts at the second step in brassinolide biosynthesis in the 5alpha-reduction of (24R)- 24-methylcholest-4-en-3-one, which is further modified to form campestanol. Can use progesterone, testosterone, androstenedione and campestenone as substrate. Also catalyzes the conversion of campest-4-en-3-one (campesta-4-en-3-one, 4-en-3-one) to campest-3-one (campesta-3-one, 3-one), of (22S,24R)-22-hydroxyergost-4-en-3-one (22-hydroxy-campesta-4-en-3-one, 22-OH-4-en-3-one) to (22S,24R)-22-hydroxy-5alpha-ergostan-3-one (22-hydroxy-campesta-3-one, 22-OH-3-one), and of (22R,23R)-22,23-dihydroxy-5alpha-campestan-3-one (22,23,diOH-4-en-3-one) to (22R,23R)-22,23-dihydroxycampest-4-en-3-one (6-deoxo3DT). Required for the brassinosteroid- (BR) dependent regulation of seed size and shape as well as embryo development. This Arabidopsis thaliana (Mouse-ear cress) protein is Steroid 5-alpha-reductase DET2.